We begin with the raw amino-acid sequence, 313 residues long: 4-diphosphocytidyl-2-C-methyl-D-erythritol kinase (313 aa).

Lys10 is an active-site residue. Residue 95-105 (PVTAGLGGGSS) coordinates ATP. The active site involves Asp136. Residues 289–313 (HPRVSPWRSPRSASSRSTRRSSRPT) form a disordered region. The segment covering 292–304 (VSPWRSPRSASSR) has biased composition (low complexity).

It belongs to the GHMP kinase family. IspE subfamily.

It catalyses the reaction 4-CDP-2-C-methyl-D-erythritol + ATP = 4-CDP-2-C-methyl-D-erythritol 2-phosphate + ADP + H(+). It participates in isoprenoid biosynthesis; isopentenyl diphosphate biosynthesis via DXP pathway; isopentenyl diphosphate from 1-deoxy-D-xylulose 5-phosphate: step 3/6. Catalyzes the phosphorylation of the position 2 hydroxy group of 4-diphosphocytidyl-2C-methyl-D-erythritol. The sequence is that of 4-diphosphocytidyl-2-C-methyl-D-erythritol kinase from Anaeromyxobacter dehalogenans (strain 2CP-1 / ATCC BAA-258).